The primary structure comprises 782 residues: uncharacterized protein (782 aa).

Residues 10-30 (LLTITIGAVAVSSILLGGIFY) traverse the membrane as a helical segment. Over residues 57 to 76 (LDYQKARPSIKDSNLKEIPK) the composition is skewed to basic and acidic residues. Residues 57–171 (LDYQKARPSI…PQPQQVPNNS (115 aa)) form a disordered region. Residues 77 to 97 (PKPQPKPKPQPTPFPDPIPTP) are compositionally biased toward pro residues. The segment covering 98-124 (PKKEELKKPDIKPEEPKKPEIKPEPKP) has biased composition (basic and acidic residues). Pro residues predominate over residues 125-135 (EPIPQPAPPIE).

This sequence to U.parvum UU046.

It localises to the membrane. This is an uncharacterized protein from Ureaplasma parvum serovar 3 (strain ATCC 700970).